The sequence spans 273 residues: 4-hydroxy-tetrahydrodipicolinate reductase (273 aa).

NAD(+) is bound at residue 12–17 (GAMGRM). Lys39 contacts NADP(+). Residues 102 to 104 (GTT) and 126 to 129 (ASNF) each bind NAD(+). The Proton donor/acceptor role is filled by His159. Residue His160 participates in (S)-2,3,4,5-tetrahydrodipicolinate binding. The Proton donor role is filled by Lys163. 169-170 (GT) lines the (S)-2,3,4,5-tetrahydrodipicolinate pocket.

Belongs to the DapB family. In terms of assembly, homotetramer.

Its subcellular location is the cytoplasm. The catalysed reaction is (S)-2,3,4,5-tetrahydrodipicolinate + NAD(+) + H2O = (2S,4S)-4-hydroxy-2,3,4,5-tetrahydrodipicolinate + NADH + H(+). The enzyme catalyses (S)-2,3,4,5-tetrahydrodipicolinate + NADP(+) + H2O = (2S,4S)-4-hydroxy-2,3,4,5-tetrahydrodipicolinate + NADPH + H(+). The protein operates within amino-acid biosynthesis; L-lysine biosynthesis via DAP pathway; (S)-tetrahydrodipicolinate from L-aspartate: step 4/4. Its function is as follows. Catalyzes the conversion of 4-hydroxy-tetrahydrodipicolinate (HTPA) to tetrahydrodipicolinate. The chain is 4-hydroxy-tetrahydrodipicolinate reductase from Buchnera aphidicola subsp. Schizaphis graminum (strain Sg).